A 227-amino-acid polypeptide reads, in one-letter code: Enolase-phosphatase E1 (227 aa).

Positions 11 and 13 each coordinate Mg(2+). Residues 118-119 (SS) and Lys161 each bind substrate. Residue Asp186 participates in Mg(2+) binding.

This sequence belongs to the HAD-like hydrolase superfamily. MasA/MtnC family. Monomer. Requires Mg(2+) as cofactor.

Its subcellular location is the cytoplasm. It is found in the nucleus. It catalyses the reaction 5-methylsulfanyl-2,3-dioxopentyl phosphate + H2O = 1,2-dihydroxy-5-(methylsulfanyl)pent-1-en-3-one + phosphate. Its pathway is amino-acid biosynthesis; L-methionine biosynthesis via salvage pathway; L-methionine from S-methyl-5-thio-alpha-D-ribose 1-phosphate: step 3/6. The protein operates within amino-acid biosynthesis; L-methionine biosynthesis via salvage pathway; L-methionine from S-methyl-5-thio-alpha-D-ribose 1-phosphate: step 4/6. Functionally, bifunctional enzyme that catalyzes the enolization of 2,3-diketo-5-methylthiopentyl-1-phosphate (DK-MTP-1-P) into the intermediate 2-hydroxy-3-keto-5-methylthiopentenyl-1-phosphate (HK-MTPenyl-1-P), which is then dephosphorylated to form the acireductone 1,2-dihydroxy-3-keto-5-methylthiopentene (DHK-MTPene). This Saccharomyces cerevisiae (strain YJM789) (Baker's yeast) protein is Enolase-phosphatase E1.